Consider the following 562-residue polypeptide: Apical membrane antigen 1 (562 aa).

The first 21 residues, 1–21 (MNKIYCILFLSAQCLVHMGKC), serve as a signal peptide directing secretion. Residues 22–484 (EPNQKPSRLT…QYAQGESKNQ (463 aa)) lie on the Extracellular side of the membrane. N84 and N176 each carry an N-linked (GlcNAc...) asparagine glycan. 8 disulfide bridges follow: C94/C247, C162/C192, C208/C220, C265/C363, C282/C354, C388/C444, C432/C449, and C434/C451. N226 is a glycosylation site (N-linked (GlcNAc...) asparagine). N405 and N441 each carry an N-linked (GlcNAc...) asparagine glycan. Residues 485-507 (MLLIIIGITGGVCVVALASMFYF) form a helical membrane-spanning segment. The Cytoplasmic portion of the chain corresponds to 508–562 (RKKAHNDKYDKMEQADGYGKPTTRKDEMLDPEASFWGEEKRASHTTPVLMEKPYY). A disordered region spans residues 519-543 (MEQADGYGKPTTRKDEMLDPEASFW).

The protein belongs to the apicomplexan parasites AMA1 family.

The protein resides in the membrane. In terms of biological role, involved in parasite invasion of erythrocytes. This chain is Apical membrane antigen 1 (AMA-1), found in Plasmodium fragile.